The primary structure comprises 98 residues: MIFVITIKMNCLNHEVFYLLQEAASKAENDGKNLYIYPQGNNFSAGADLKLLLSYIEDKNFHDLENLLKLGQQTMLHLKYSSVHVISLWSWCGTWRWI.

This is an uncharacterized protein from Rickettsia conorii (strain ATCC VR-613 / Malish 7).